Reading from the N-terminus, the 251-residue chain is Carbohydrate deacetylase (251 aa).

Positions 59 and 122 each coordinate Mg(2+).

The protein belongs to the YdjC deacetylase family. As to quaternary structure, homodimer. Mg(2+) is required as a cofactor.

In terms of biological role, probably catalyzes the deacetylation of acetylated carbohydrates an important step in the degradation of oligosaccharides. The sequence is that of Carbohydrate deacetylase from Vibrio campbellii (strain ATCC BAA-1116).